A 463-amino-acid chain; its full sequence is L-seryl-tRNA(Sec) selenium transferase (463 aa).

Lys-295 bears the N6-(pyridoxal phosphate)lysine mark.

It belongs to the SelA family. In terms of assembly, homodecamer; pentamer of dimers. Binds only one seryl-tRNA(Sec) per dimer. Requires pyridoxal 5'-phosphate as cofactor.

Its subcellular location is the cytoplasm. The enzyme catalyses L-seryl-tRNA(Sec) + selenophosphate + H(+) = L-selenocysteinyl-tRNA(Sec) + phosphate. The protein operates within aminoacyl-tRNA biosynthesis; selenocysteinyl-tRNA(Sec) biosynthesis; selenocysteinyl-tRNA(Sec) from L-seryl-tRNA(Sec) (bacterial route): step 1/1. Functionally, converts seryl-tRNA(Sec) to selenocysteinyl-tRNA(Sec) required for selenoprotein biosynthesis. The sequence is that of L-seryl-tRNA(Sec) selenium transferase from Shigella flexneri serotype 5b (strain 8401).